The following is a 184-amino-acid chain: Serine recombinase PinE (184 aa).

Residues M1–G134 form the Resolvase/invertase-type recombinase catalytic domain. Catalysis depends on S9, which acts as the O-(5'-phospho-DNA)-serine intermediate. The H-T-H motif DNA-binding region spans R161 to P180.

Belongs to the site-specific recombinase resolvase family.

Its function is as follows. This protein catalyzes the inversion of an 1800-bp E.coli DNA fragment, the P region, which can exist in either orientation. The function of the inversion is not yet clear. The sequence is that of Serine recombinase PinE (pinE) from Escherichia coli (strain K12).